Reading from the N-terminus, the 336-residue chain is Dihydroorotate dehydrogenase (quinone) (336 aa).

FMN is bound by residues 62–66 and T86; that span reads AGMDK. K66 contributes to the substrate binding site. Substrate is bound at residue 111 to 115; the sequence is NRMGF. Residues N139 and N172 each contribute to the FMN site. N172 is a binding site for substrate. S175 serves as the catalytic Nucleophile. Residue N177 participates in substrate binding. Residues K217 and T245 each coordinate FMN. 246-247 serves as a coordination point for substrate; it reads NT. Residues G268, G297, and 318–319 contribute to the FMN site; that span reads YS.

It belongs to the dihydroorotate dehydrogenase family. Type 2 subfamily. In terms of assembly, monomer. FMN serves as cofactor.

The protein resides in the cell membrane. It carries out the reaction (S)-dihydroorotate + a quinone = orotate + a quinol. The protein operates within pyrimidine metabolism; UMP biosynthesis via de novo pathway; orotate from (S)-dihydroorotate (quinone route): step 1/1. Catalyzes the conversion of dihydroorotate to orotate with quinone as electron acceptor. This Buchnera aphidicola subsp. Schizaphis graminum (strain Sg) protein is Dihydroorotate dehydrogenase (quinone).